Here is a 79-residue protein sequence, read N- to C-terminus: Orally active insecticidal peptide (79 aa).

An N-terminal signal peptide occupies residues 1 to 19; it reads MRVLFIIAGLALLSVVCYT. A propeptide spanning residues 20 to 44 is cleaved from the precursor; it reads SEMKERSSFNEVLSEFFAADEPQER. 3 disulfide bridges follow: cysteine 46–cysteine 61, cysteine 53–cysteine 66, and cysteine 60–cysteine 73. At alanine 77 the chain carries Alanine amide.

The protein belongs to the neurotoxin 03 (Tx2) family. 01 subfamily. Expressed by the venom gland.

It is found in the secreted. Its function is as follows. Probable ion channel inhibitor. Shows insecticidal activity when injected into mealworms. The protein is Orally active insecticidal peptide of Selenotypus plumipes (Australian featherleg tarantula).